A 1191-amino-acid polypeptide reads, in one-letter code: Roquin-2 (1191 aa).

Zn(2+) is bound by residues C14, C17, C33, H35, C38, C50, and D53. The RING-type; degenerate zinc-finger motif lies at C14 to Q54. The interval E91–H170 is HEPN-N. The interval Q171–E325 is ROQ. Residues S326–S396 form an HEPN-C region. The segment at K410 to E438 adopts a C3H1-type zinc-finger fold. 2 disordered regions span residues G528 to P576 and E644 to Y680. Residues N530 to K546 are compositionally biased toward polar residues. At S549 the chain carries Phosphoserine. The span at P554–P576 shows a compositional bias: polar residues. S808, S983, and S1119 each carry phosphoserine.

As to quaternary structure, interacts with EDC4. Interacts with CCR4-NOT deadenylase complex. Interacts with MAP3K5; the interaction is probably stimulus-dependent. Post-translationally, proteolytically cleaved after Arg-509 and Arg-585 by MALT1 in activated CD4(+) T cells; cleavage at Arg-509 and Arg-585 is critical for promoting RC3H1 degradation in response to T-cell receptor (TCR) stimulation, and hence is necessary for prolonging the stability of a set of mRNAs controlling Th17 cell differentiation. Expressed in spleen, testis, ovary and small intestine.

It is found in the cytoplasm. Its subcellular location is the P-body. It catalyses the reaction S-ubiquitinyl-[E2 ubiquitin-conjugating enzyme]-L-cysteine + [acceptor protein]-L-lysine = [E2 ubiquitin-conjugating enzyme]-L-cysteine + N(6)-ubiquitinyl-[acceptor protein]-L-lysine.. It participates in protein modification; protein ubiquitination. Its activity is regulated as follows. Binding to dsRNA, but not CDE RNA, crosstalks with the E3 ubiquitin ligase activity and may inhibit ubiquitination. Functionally, post-transcriptional repressor of mRNAs containing a conserved stem loop motif, called constitutive decay element (CDE), which is often located in the 3'-UTR, as in HMGXB3, ICOS, IER3, NFKBID, NFKBIZ, PPP1R10, TNF and in many more mRNAs. Binds to CDE and promotes mRNA deadenylation and degradation. This process does not involve miRNAs. In follicular helper T (Tfh) cells, represses of ICOS and TNFRSF4 expression, thus preventing spontaneous Tfh cell differentiation, germinal center B-cell differentiation in the absence of immunization and autoimmunity. In resting or LPS-stimulated macrophages, controls inflammation by suppressing TNF expression. Also recognizes CDE in its own mRNA and in that of paralogous RC3H1, possibly leading to feedback loop regulation. miRNA-binding protein that regulates microRNA homeostasis. Enhances DICER-mediated processing of pre-MIR146a but reduces mature MIR146a levels through an increase of 3' end uridylation. Both inhibits ICOS mRNA expression and they may act together to exert the suppression. Acts as a ubiquitin E3 ligase. Pairs with E2 enzymes UBE2B, UBE2D2, UBE2E2, UBE2E3, UBE2G2, UBE2K and UBE2Q2 and produces polyubiquitin chains. Shows the strongest activity when paired with UBE2N:UBE2V1 or UBE2N:UBE2V2 E2 complexes and generate both short and long polyubiquitin chains. Involved in the ubiquitination of MAP3K5. Able to interact with double-stranded RNA (dsRNA). The polypeptide is Roquin-2 (RC3H2) (Homo sapiens (Human)).